The primary structure comprises 347 residues: Protein RecA (347 aa).

Residue 67-74 (GPESSGKT) coordinates ATP.

It belongs to the RecA family.

The protein resides in the cytoplasm. Can catalyze the hydrolysis of ATP in the presence of single-stranded DNA, the ATP-dependent uptake of single-stranded DNA by duplex DNA, and the ATP-dependent hybridization of homologous single-stranded DNAs. It interacts with LexA causing its activation and leading to its autocatalytic cleavage. The sequence is that of Protein RecA from Paenarthrobacter aurescens (strain TC1).